The sequence spans 101 residues: MNQLKKSFSPTEGKKDQNNLINDPQKNKQKKQKKLVDMEGLVTHNLSNGKFRLKLENGVEVIGHLSGKIRQNRIKIVVGDKVTVELSPYDLTKGRITYRHR.

Polar residues predominate over residues 1-10 (MNQLKKSFSP). A disordered region spans residues 1–35 (MNQLKKSFSPTEGKKDQNNLINDPQKNKQKKQKKL). Residues 26–101 (KNKQKKQKKL…TKGRITYRHR (76 aa)) enclose the S1-like domain.

This sequence belongs to the IF-1 family. In terms of assembly, component of the 30S ribosomal translation pre-initiation complex which assembles on the 30S ribosome in the order IF-2 and IF-3, IF-1 and N-formylmethionyl-tRNA(fMet); mRNA recruitment can occur at any time during PIC assembly.

It localises to the plastid. It is found in the chloroplast. Its function is as follows. One of the essential components for the initiation of protein synthesis. Stabilizes the binding of IF-2 and IF-3 on the 30S subunit to which N-formylmethionyl-tRNA(fMet) subsequently binds. Helps modulate mRNA selection, yielding the 30S pre-initiation complex (PIC). Upon addition of the 50S ribosomal subunit IF-1, IF-2 and IF-3 are released leaving the mature 70S translation initiation complex. This Tetradesmus obliquus (Green alga) protein is Translation initiation factor IF-1, chloroplastic.